The primary structure comprises 369 residues: MMTEAQGPVVSIGSATVTYDHPPIISPVSYPKARPTQILDIRKRTSRIDLYHEILAGLRAKDKELPSLLLWNDRGLDLFSEILNSDEYYPRRRETQLLQTHVNEFTRSISSGERLIELGAGNLQKTVSVLRCLEQSRKHVEYCALDVSHAALQASITELKAQLPFASYVTIRGLLGTYNDCASWLKQSGATVRTTFLWLGNSIANFEPEDATSILADFLQTKASPSHSPQMIIAVDGCQDVEQILEAYDMPNKLSQKFVFNGLSHANQILGSEVFRPQHWTFEGKWNPVKSMHESFYVAKKPMSLDIGNERFHVHAGEKIRAITSGKWPKDKVTSICQSAGIKVLKGWTDEEGSYGKRVTQVYSRGSSC.

The protein belongs to the methyltransferase superfamily.

It participates in secondary metabolite biosynthesis. Its function is as follows. N-methyltransferase; part of the gene cluster that mediates the biosynthesis of imizoquins A to D, tripeptide-derived alkaloids that serve a protective role against oxidative stress that are essential for normal germination. ImqB is a canonical three-module NRPS that assembles the tripeptide backbone of the imizoquins via condensation of Trp, Tyr, and Leu-derived precursors. N-methylation by imqF and phenol oxidation by imqC, followed by cyclization via the FAD-dependent oxidase imqH carry out the three-step transformation of L-tyrosine into tetrahydroisoquinoline. Importantly, this sequence requires the presence of a free amine in the tyrosine moiety, indicating that isoquinoline formation occurs prior to peptide bond formation. The imidazolidin-4-one ring of imizoquins could form following additional oxidation of the methyl-derived bridgehead carbon by imqH. Lastly, O-methylation by imqG and leucine hydroxylation by imqE complete biosynthesis of the imizoquins. The polypeptide is N-methyltransferase imqF (Aspergillus flavus (strain ATCC 200026 / FGSC A1120 / IAM 13836 / NRRL 3357 / JCM 12722 / SRRC 167)).